Reading from the N-terminus, the 470-residue chain is UDP-N-acetylmuramoylalanine--D-glutamate ligase (470 aa).

121 to 127 serves as a coordination point for ATP; that stretch reads GTNGKST.

It belongs to the MurCDEF family.

It localises to the cytoplasm. It catalyses the reaction UDP-N-acetyl-alpha-D-muramoyl-L-alanine + D-glutamate + ATP = UDP-N-acetyl-alpha-D-muramoyl-L-alanyl-D-glutamate + ADP + phosphate + H(+). It functions in the pathway cell wall biogenesis; peptidoglycan biosynthesis. In terms of biological role, cell wall formation. Catalyzes the addition of glutamate to the nucleotide precursor UDP-N-acetylmuramoyl-L-alanine (UMA). The chain is UDP-N-acetylmuramoylalanine--D-glutamate ligase from Rhizobium etli (strain ATCC 51251 / DSM 11541 / JCM 21823 / NBRC 15573 / CFN 42).